The chain runs to 1435 residues: MAPDDESKKRATRKSTKRWKEEHQVATEIPERFREGDDEDEDCTAGHALNKSVFGMIAAASSIVDFNARFDAQSSDEEYDLGKPTRQSSESHINRSSIDQKMGKFEGHRRLLSESKILRSFSRFSSRSKSKSSNTIARGSRTPSPLRESRQEPTSPEIRYSPLQPKDTPVMSRMLEARAELSLRPSFEMPRKSKDPAEVDDERTSPDSLAERLMEIFKFETPEDVLEEYPCWLMKSVLLQGYMYITTKHICFYAYLPKKANEVVKSGYLSKSGRHNPKYNRYWFRLKDDVLSYYTNPSDLYFPSGNIDLRYGISASIVEKEKGKDSTHFTVETHQRKYNFNADSAPSAKEWVKALQKIIFRSHNDGDSVKISLPIENIIDIEDSRIIDFADTCKIRIIDNDETYAIDEYFFSFFTNGKLALSVLKILVGDTAAQKIPEELLSPLSTADDSRGSSKRTSFQVSRDRKLHGPSVQPNAPALEETVRATLSPLLAPGAGSPRASTDMSLSSSDIFRRSLDINKHGRRSIDLNRLTTEHHRSNSANSISTRRSLSTNRLDQEKRTSKQGSSDSYVHSLEEPGSSEALPSASDETQASASQILRGSDVFLSPTIQHSPSVACNRNKDEIQGPKSRSLTSPIKSADVSPTRTQRPQHPKHAATTGSVSDSNVGQAEISSGPSLQSIVKAGSYPLQRAAGFAGYLNRHSKRMSTLLASESMGYVEKVSGMWKGGKKHYEEPHGIPRDNEMPSIGDDDDNRDGATPADRFRDHFALPPDEKLHATYFGYLQRVLPLYGKIYISDRSFCFRSLLPGTRTKFILPLKDIENVDKEKGFRFGYSGLVITIRGHEEIFFEFNQAENRDDCAITLLQNVETMQYMQDSGLLTMYERESAEMAGAEHRALIQARRGIRSEHDIDMHKAADGGSQSISFDDPRASILNFKPTEPLRITCLTIGSRGDVQPYIALCKGLMAEGHQTKIATHLEFKEWIESHGIEFAPVDGDPAELMRICVENGMFTVSFLKEASSKFRGWIDDLLSSSWRACQNSDILIESPSAMAGIHIAEALRIPYFRAFTMPWTRTRAYPHAFAVPEHKLGGSYNYVTYLMFDTVFWRAISGQVNRWRQKELNLQATGLEKMQPNKVPFLYNFSPSVVVPPLDYSDWIRVTGYWFLDEGANYTPPKDLTDFIANARADGKRLVYVGFGSIVVADSAVLTKTVVASVLKADVRCILSKGWSDRLEKKGANNVEIPLPPEIFQIKSAPHDWLFSQVDAAAHHGGAGTTGASLRAGIPTIIRPFFGDQFFFGQRVEDLGVGVLIKKINVSVFSRALWEATHSERIITKARVLGEQIRKENGVDTAIQSIYRDMEYAKSLIKCKEGKSDDDTLEDSEESWTFIGDDTDPELIKRFYDWESMAHSGTLSDKNMMAWSGSDVASAALSPTRKAA.

Disordered regions lie at residues 1-26 (MAPD…HQVA), 75-107 (SDEE…KFEG), 123-169 (RFSS…KDTP), and 185-206 (PSFE…RTSP). Residues 85–99 (TRQSSESHINRSSID) are compositionally biased toward polar residues. The segment covering 123-133 (RFSSRSKSKSS) has biased composition (low complexity). Residues 134 to 143 (NTIARGSRTP) show a composition bias toward polar residues. Over residues 189–206 (MPRKSKDPAEVDDERTSP) the composition is skewed to basic and acidic residues. Residues 211 to 258 (ERLMEIFKFETPEDVLEEYPCWLMKSVLLQGYMYITTKHICFYAYLPK) form the GRAM 1 domain. Residues 262–360 (EVVKSGYLSK…WVKALQKIIF (99 aa)) form the PH domain. 4 disordered regions span residues 444 to 477 (LSTA…PNAP), 527 to 594 (DLNR…QASA), 610 to 671 (QHSP…QAEI), and 727 to 759 (GKKH…ATPA). The span at 527 to 537 (DLNRLTTEHHR) shows a compositional bias: basic and acidic residues. Polar residues-rich tracts occupy residues 539–554 (NSAN…STNR), 628–647 (KSRS…TRTQ), and 657–671 (TTGS…QAEI). Over residues 729-742 (KHYEEPHGIPRDNE) the composition is skewed to basic and acidic residues. The region spanning 760–826 (DRFRDHFALP…KDIENVDKEK (67 aa)) is the GRAM 2 domain. Residues Ser-949, Arg-950, Asp-952, Ala-1252, His-1254, His-1267, Gly-1271, Thr-1272, Asp-1291, and Gln-1292 each contribute to the UDP-alpha-D-glucose site.

It belongs to the glycosyltransferase 28 family.

It localises to the cytoplasm. The protein localises to the preautophagosomal structure membrane. It catalyses the reaction a sterol + UDP-alpha-D-glucose = a sterol 3-beta-D-glucoside + UDP + H(+). It carries out the reaction ergosterol + UDP-alpha-D-glucose = ergosteryl 3-beta-D-glucoside + UDP + H(+). Its function is as follows. Sterol glycosyltransferase responsible for the glycosylation of ergosterol to form ergosterol-glucoside. The sequence is that of Sterol 3-beta-glucosyltransferase from Sclerotinia sclerotiorum (strain ATCC 18683 / 1980 / Ss-1) (White mold).